We begin with the raw amino-acid sequence, 306 residues long: Dihydroorotate dehydrogenase B (NAD(+)), catalytic subunit (306 aa).

Residues Ser-22 and Lys-46–Thr-47 each bind FMN. Substrate contacts are provided by residues Lys-46, Asn-70–Leu-74, and Asn-128. Asn-128 serves as a coordination point for FMN. Residue Cys-131 is the Nucleophile of the active site. Lys-164 contacts FMN. Asn-191–Thr-192 lines the substrate pocket. FMN is bound by residues Gly-216, Gly-242–Gly-243, and Gly-264–Ser-265.

Belongs to the dihydroorotate dehydrogenase family. Type 1 subfamily. In terms of assembly, heterotetramer of 2 PyrK and 2 PyrD type B subunits. The cofactor is FMN.

Its subcellular location is the cytoplasm. The catalysed reaction is (S)-dihydroorotate + NAD(+) = orotate + NADH + H(+). The protein operates within pyrimidine metabolism; UMP biosynthesis via de novo pathway; orotate from (S)-dihydroorotate (NAD(+) route): step 1/1. Functionally, catalyzes the conversion of dihydroorotate to orotate with NAD(+) as electron acceptor. The chain is Dihydroorotate dehydrogenase B (NAD(+)), catalytic subunit (pyrD) from Endomicrobium trichonymphae.